Reading from the N-terminus, the 390-residue chain is Leucine aminopeptidase 1 (390 aa).

The signal sequence occupies residues 1–18 (MKLSTALVLGATATGAWS). Positions 19 to 90 (YAIPQLEQEV…FPTLDAGSYV (72 aa)) are excised as a propeptide. Asn-120 carries an N-linked (GlcNAc...) asparagine glycan. Residues His-190, Asp-209, Glu-248, and Asp-275 each coordinate Zn(2+). Cysteines 324 and 328 form a disulfide. His-357 contributes to the Zn(2+) binding site.

It belongs to the peptidase M28 family. M28E subfamily. Monomer. It depends on Zn(2+) as a cofactor.

The protein localises to the secreted. In terms of biological role, extracellular aminopeptidase that allows assimilation of proteinaceous substrates. This is Leucine aminopeptidase 1 (lap1) from Emericella nidulans (strain FGSC A4 / ATCC 38163 / CBS 112.46 / NRRL 194 / M139) (Aspergillus nidulans).